A 276-amino-acid chain; its full sequence is Secretagogin (276 aa).

EF-hand domains follow at residues 12–47 (LDAA…VLTK), 58–93 (NVWK…EDEN), 105–140 (DSSV…LFLH), 149–184 (KLEE…QENF), 197–232 (ERKR…MMEL), and 240–276 (VDLD…KINP). Ca(2+) contacts are provided by Asp-71, Ser-73, Asp-75, His-77, Glu-82, Asp-118, Asp-120, Ser-122, Glu-129, Asp-162, Asn-164, Asp-166, Arg-168, Asp-173, Asp-210, Ser-212, Thr-214, Glu-221, Asp-254, Asn-256, Asp-258, Lys-260, and Glu-265.

The protein resides in the cytoplasm. It localises to the secreted. Its subcellular location is the cytoplasmic vesicle. The protein localises to the secretory vesicle membrane. In Sus scrofa (Pig), this protein is Secretagogin (SCGN).